The sequence spans 213 residues: ATP phosphoribosyltransferase (213 aa).

The protein belongs to the ATP phosphoribosyltransferase family. Short subfamily. Heteromultimer composed of HisG and HisZ subunits.

It is found in the cytoplasm. The catalysed reaction is 1-(5-phospho-beta-D-ribosyl)-ATP + diphosphate = 5-phospho-alpha-D-ribose 1-diphosphate + ATP. It participates in amino-acid biosynthesis; L-histidine biosynthesis; L-histidine from 5-phospho-alpha-D-ribose 1-diphosphate: step 1/9. Catalyzes the condensation of ATP and 5-phosphoribose 1-diphosphate to form N'-(5'-phosphoribosyl)-ATP (PR-ATP). Has a crucial role in the pathway because the rate of histidine biosynthesis seems to be controlled primarily by regulation of HisG enzymatic activity. In Saccharophagus degradans (strain 2-40 / ATCC 43961 / DSM 17024), this protein is ATP phosphoribosyltransferase.